The sequence spans 410 residues: Peptidase T (410 aa).

The interval 11-30 is disordered; the sequence is RYAEIDTQSDPDSESTPSTE. His78 serves as a coordination point for Zn(2+). Residue Asp80 is part of the active site. Residue Asp140 participates in Zn(2+) binding. Glu174 (proton acceptor) is an active-site residue. Residues Glu175, Asp197, and His379 each contribute to the Zn(2+) site.

The protein belongs to the peptidase M20B family. The cofactor is Zn(2+).

It localises to the cytoplasm. The catalysed reaction is Release of the N-terminal residue from a tripeptide.. Functionally, cleaves the N-terminal amino acid of tripeptides. This Staphylococcus carnosus (strain TM300) protein is Peptidase T.